The following is a 336-amino-acid chain: tRNA N6-adenosine threonylcarbamoyltransferase (336 aa).

The Fe cation site is built by His-112 and His-116. Residues 136–140, Asp-169, Gly-182, and Asn-276 each bind substrate; that span reads LVSGG. Asp-304 is a Fe cation binding site.

The protein belongs to the KAE1 / TsaD family. It depends on Fe(2+) as a cofactor.

Its subcellular location is the cytoplasm. The enzyme catalyses L-threonylcarbamoyladenylate + adenosine(37) in tRNA = N(6)-L-threonylcarbamoyladenosine(37) in tRNA + AMP + H(+). Its function is as follows. Required for the formation of a threonylcarbamoyl group on adenosine at position 37 (t(6)A37) in tRNAs that read codons beginning with adenine. Is involved in the transfer of the threonylcarbamoyl moiety of threonylcarbamoyl-AMP (TC-AMP) to the N6 group of A37, together with TsaE and TsaB. TsaD likely plays a direct catalytic role in this reaction. The sequence is that of tRNA N6-adenosine threonylcarbamoyltransferase from Francisella tularensis subsp. holarctica (strain LVS).